The following is a 670-amino-acid chain: MESIIQQINQLRTSLRHHEHQYHVLDAPEIPDAEYDRMMQQLRDLEAQHPELVTNDSPTQRVGAAPLDAFEQVKHEVPMLSLDNVFDEESYLAFDKRVHDRLKTAEPLTFCCELKLDGLAVSLLYENGELVRAATRGDGTTGENITANVRTIRAIPLRLHGDNVPRRVEVRGEVFMPQAGFEQLNEEARRKGGKVFANPRNAAAGSLRQLDPRITAKRPLTFFCYGVGLLDGGELPRSHIQCLMQFKAWGLPVSERVKLCTGSDQVIAFYRQIEQDRAGLGFDIDGVVIKVDDLVLQEQLGFVARAPRWATAFKFPAQEQITQVREVEFQVGRTGAITPVARLEPVQVAGVIVSNATLHNADEIERLGLRIGDTVIVRRAGDVIPQVVGVVMEQRPDDTKEITFPSQCPVCGSDIERVEGEAVARCTGGLFCAAQRKEALKHFVSRRALDVDGMGDKIIEQLVEKQYVENPADLFQLTAGKLTGLDRMGPKSAQNLIAALEKAKQTTFARFLYALGIREVGEATAANLAAHFRTLDNLRAADIETLKSVPDVGEVVAKHVMNFLSEEHNQKVIEELEKVVSWPEPQQIVVEEIDSPFAGKTVVLTGSLTILSRDEAKDRLTALGAKVSGSVSKKTHLVIAGEAAGSKLAKAQELGIKVIDEAEMIRLLGE.

NAD(+) is bound by residues 32 to 36 (DAEYD), 81 to 82 (SL), and glutamate 113. Lysine 115 acts as the N6-AMP-lysine intermediate in catalysis. The NAD(+) site is built by arginine 136, glutamate 173, lysine 290, and lysine 314. Residues cysteine 408, cysteine 411, cysteine 426, and cysteine 432 each contribute to the Zn(2+) site. The BRCT domain occupies 592–670 (EIDSPFAGKT…EAEMIRLLGE (79 aa)).

It belongs to the NAD-dependent DNA ligase family. LigA subfamily. Requires Mg(2+) as cofactor. The cofactor is Mn(2+).

It catalyses the reaction NAD(+) + (deoxyribonucleotide)n-3'-hydroxyl + 5'-phospho-(deoxyribonucleotide)m = (deoxyribonucleotide)n+m + AMP + beta-nicotinamide D-nucleotide.. Functionally, DNA ligase that catalyzes the formation of phosphodiester linkages between 5'-phosphoryl and 3'-hydroxyl groups in double-stranded DNA using NAD as a coenzyme and as the energy source for the reaction. It is essential for DNA replication and repair of damaged DNA. The chain is DNA ligase from Yersinia pseudotuberculosis serotype IB (strain PB1/+).